The following is a 318-amino-acid chain: Pantothenate kinase (318 aa).

96–103 (GSVAVGKS) provides a ligand contact to ATP.

Belongs to the prokaryotic pantothenate kinase family.

The protein resides in the cytoplasm. The catalysed reaction is (R)-pantothenate + ATP = (R)-4'-phosphopantothenate + ADP + H(+). Its pathway is cofactor biosynthesis; coenzyme A biosynthesis; CoA from (R)-pantothenate: step 1/5. This Nitrobacter hamburgensis (strain DSM 10229 / NCIMB 13809 / X14) protein is Pantothenate kinase.